The primary structure comprises 468 residues: Argininosuccinate lyase (468 aa).

Serine 33, asparagine 121, and threonine 166 together coordinate 2-(N(omega)-L-arginino)succinate. Histidine 167 acts as the Proton acceptor in catalysis. The Proton donor role is filled by serine 288. Positions 296, 328, 333, and 336 each coordinate 2-(N(omega)-L-arginino)succinate.

This sequence belongs to the lyase 1 family. Argininosuccinate lyase subfamily. As to quaternary structure, homotetramer.

The catalysed reaction is 2-(N(omega)-L-arginino)succinate = fumarate + L-arginine. It functions in the pathway amino-acid biosynthesis; L-arginine biosynthesis; L-arginine from L-ornithine and carbamoyl phosphate: step 3/3. This is Argininosuccinate lyase (ARG4) from Candida albicans (Yeast).